The following is a 545-amino-acid chain: Carboxypeptidase Y homolog A (545 aa).

The N-terminal stretch at 1–17 (MKSLALALLVGGAIAAG) is a signal peptide. The propeptide occupies 18 to 123 (PQQQVLQAPV…KLEAYDLRVK (106 aa)). Intrachain disulfides connect Cys177-Cys416, Cys311-Cys325, Cys335-Cys358, Cys342-Cys351, and Cys380-Cys386. Residue Asn208 is glycosylated (N-linked (GlcNAc...) asparagine). Residue Ser264 is part of the active site. Residue Asp455 is part of the active site. N-linked (GlcNAc...) asparagine glycans are attached at residues Asn485, Asn491, and Asn506. His517 is a catalytic residue.

It belongs to the peptidase S10 family.

It localises to the vacuole. The enzyme catalyses Release of a C-terminal amino acid with broad specificity.. Vacuolar carboxypeptidase involved in degradation of small peptides. Digests preferentially peptides containing an aliphatic or hydrophobic residue in P1' position, as well as methionine, leucine or phenylalanine in P1 position of ester substrate. In Blastomyces gilchristii (strain SLH14081) (Blastomyces dermatitidis), this protein is Carboxypeptidase Y homolog A (CPYA).